The sequence spans 137 residues: Nucleoside diphosphate kinase (137 aa).

Positions 9, 57, 85, 91, 102, and 112 each coordinate ATP. The active-site Pros-phosphohistidine intermediate is the His-115.

It belongs to the NDK family. As to quaternary structure, homotetramer. Mg(2+) serves as cofactor.

The protein resides in the cytoplasm. It catalyses the reaction a 2'-deoxyribonucleoside 5'-diphosphate + ATP = a 2'-deoxyribonucleoside 5'-triphosphate + ADP. The enzyme catalyses a ribonucleoside 5'-diphosphate + ATP = a ribonucleoside 5'-triphosphate + ADP. In terms of biological role, major role in the synthesis of nucleoside triphosphates other than ATP. The ATP gamma phosphate is transferred to the NDP beta phosphate via a ping-pong mechanism, using a phosphorylated active-site intermediate. The protein is Nucleoside diphosphate kinase of Campylobacter curvus (strain 525.92).